Consider the following 147-residue polypeptide: Large ribosomal subunit protein bL9 (147 aa).

The protein belongs to the bacterial ribosomal protein bL9 family.

Functionally, binds to the 23S rRNA. The chain is Large ribosomal subunit protein bL9 from Gemmatimonas aurantiaca (strain DSM 14586 / JCM 11422 / NBRC 100505 / T-27).